Reading from the N-terminus, the 232-residue chain is MSNVDHAEIAKFEALAHRWWDRESEFKPLHDINPLRVNWIDERVGLAGKKVLDVGCGGGILSEAMAQRGATVTGIDMGEAPLAVAQLHQLESGVNVEYRQITAEALAEEMPEQFDVVTCLEMLEHVPDPSSVIRACFRMVKPGGQVFFSTINRNPKAYLFAIIGAEYIMKLLPRGTHDFKKFIRPSELGAWSRSAGLTVKDIIGLTYNPLTKHYKLAPDVDVNYMIQTLREE.

Arginine 36, glycine 55, aspartate 76, and leucine 120 together coordinate S-adenosyl-L-methionine.

Belongs to the methyltransferase superfamily. UbiG/COQ3 family.

The catalysed reaction is a 3-demethylubiquinol + S-adenosyl-L-methionine = a ubiquinol + S-adenosyl-L-homocysteine + H(+). It carries out the reaction a 3-(all-trans-polyprenyl)benzene-1,2-diol + S-adenosyl-L-methionine = a 2-methoxy-6-(all-trans-polyprenyl)phenol + S-adenosyl-L-homocysteine + H(+). The protein operates within cofactor biosynthesis; ubiquinone biosynthesis. In terms of biological role, O-methyltransferase that catalyzes the 2 O-methylation steps in the ubiquinone biosynthetic pathway. This chain is Ubiquinone biosynthesis O-methyltransferase, found in Pseudomonas fluorescens (strain ATCC BAA-477 / NRRL B-23932 / Pf-5).